The primary structure comprises 528 residues: MSEQSTVPEQSASDSRRAGFVLGVDVGSSMIRCHVYDRAARICGSSAQKVESLYPQPGWVEIDPDVLWLQFVAVIKESVKAAGIETNQIVGLGISTQRATFITWDKKTGKHFHNFISWQDLRATELVKSWNGSLLMKLIHSSCRVLHFFTRSKQFLAASLFTFTTQHVSLRLAWILQNLTEVQKAVEEENCCFGTVDTWLLHKLTKGSEFATDFSNASTTGLFDPYEMCWSKIVTSLLSIPLSLLPPVKDTSHNFGSVDEEIFGVPIPIVALVADQQAAMFGECCFQTGDVKLTMGTGTFLDINTGNNPQQSVGGFYPLIGWKIGQEVVCLAESNAGDTGTAIEWAQQLDLFTDAAETEKMAQSLEDSEGVYFVPSFSGLQAPLNDPCACASFMGLKPSTNKYHLVRAILESIAFRNKQLYETMQKEIHIPVRKIRADGGVCKNSFVMQMTSDLINETIDRPVHIDMSCSGAASLAGLAVGFWSDKEELKKLRQSEMVFKPQKKWQEYEVNMGNWVKAVKRSMNWYKT.

2 residues coordinate ATP: S28 and S29. Positions 98, 275, and 276 each coordinate glycerol. Residues T297, G340, and G440 each contribute to the ATP site.

The protein belongs to the FGGY kinase family.

It is found in the cytoplasm. The catalysed reaction is glycerol + ATP = sn-glycerol 3-phosphate + ADP + H(+). The protein operates within polyol metabolism; glycerol degradation via glycerol kinase pathway; sn-glycerol 3-phosphate from glycerol: step 1/1. Functionally, skin-specific kinase that plays a key role in glycerol metabolism, catalyzing its phosphorylation to produce sn-glycerol 3-phosphate. Involved in skin-specific regulation of sterol regulatory element-binding protein (SREBP) processing and lipid biosynthesis. The protein is Glycerol kinase 5 (GK5) of Bos taurus (Bovine).